A 313-amino-acid polypeptide reads, in one-letter code: Probable myosin light chain kinase DDB_G0292624 (313 aa).

Residues Y6–I264 form the Protein kinase domain. ATP contacts are provided by residues I12–V20 and K35. D125 (proton acceptor) is an active-site residue.

Belongs to the protein kinase superfamily. CAMK Ser/Thr protein kinase family. CaMK subfamily.

The enzyme catalyses L-seryl-[myosin light chain] + ATP = O-phospho-L-seryl-[myosin light chain] + ADP + H(+). It carries out the reaction L-threonyl-[myosin light chain] + ATP = O-phospho-L-threonyl-[myosin light chain] + ADP + H(+). Does not have a calmodulin-binding domain. Its function is as follows. May phosphorylate a specific serine in the N-terminus of a myosin light chain. This Dictyostelium discoideum (Social amoeba) protein is Probable myosin light chain kinase DDB_G0292624.